We begin with the raw amino-acid sequence, 184 residues long: Probable sensory rhodopsin transducer (184 aa).

2 helical membrane passes run 14 to 34 (TLGVGAVLVLVLATLAVVNVY) and 52 to 72 (GLVSILLIVAVALLFVATIIG). Residues 73–125 (RERTAAVETLAAQARQIEQGELDVDLATNRTDDVGDIYRALAVLRDSEQLDRQ) form the HAMP domain.

Belongs to the methyl-accepting chemotaxis (MCP) protein family. As to quaternary structure, interacts with Xop2/SRM.

Its subcellular location is the membrane. The HtrM-Xop2/SRM complex may interact with CheB or CheR and modulate their availability to Sop1 or Sop2. The sequence is that of Probable sensory rhodopsin transducer (htrM) from Haloarcula marismortui (strain ATCC 43049 / DSM 3752 / JCM 8966 / VKM B-1809) (Halobacterium marismortui).